A 225-amino-acid chain; its full sequence is Probable septum site-determining protein MinC (225 aa).

This sequence belongs to the MinC family. In terms of assembly, interacts with MinD and FtsZ.

In terms of biological role, cell division inhibitor that blocks the formation of polar Z ring septums. Rapidly oscillates between the poles of the cell to destabilize FtsZ filaments that have formed before they mature into polar Z rings. Prevents FtsZ polymerization. The sequence is that of Probable septum site-determining protein MinC from Listeria monocytogenes serotype 4b (strain CLIP80459).